Reading from the N-terminus, the 361-residue chain is Chorismate synthase (361 aa).

Residues Arg48 and Arg54 each contribute to the NADP(+) site. Residues 125–127 (RSS), 238–239 (NA), Gly278, 293–297 (KPTSS), and Arg319 contribute to the FMN site.

The protein belongs to the chorismate synthase family. As to quaternary structure, homotetramer. It depends on FMNH2 as a cofactor.

It catalyses the reaction 5-O-(1-carboxyvinyl)-3-phosphoshikimate = chorismate + phosphate. Its pathway is metabolic intermediate biosynthesis; chorismate biosynthesis; chorismate from D-erythrose 4-phosphate and phosphoenolpyruvate: step 7/7. In terms of biological role, catalyzes the anti-1,4-elimination of the C-3 phosphate and the C-6 proR hydrogen from 5-enolpyruvylshikimate-3-phosphate (EPSP) to yield chorismate, which is the branch point compound that serves as the starting substrate for the three terminal pathways of aromatic amino acid biosynthesis. This reaction introduces a second double bond into the aromatic ring system. This is Chorismate synthase from Escherichia coli O157:H7.